A 673-amino-acid chain; its full sequence is DNA ligase (673 aa).

NAD(+) contacts are provided by residues 32–36 (DHVYD), 81–82 (SL), and Glu-111. The active-site N6-AMP-lysine intermediate is the Lys-113. NAD(+) is bound by residues Arg-134, Glu-171, Lys-286, and Lys-310. The Zn(2+) site is built by Cys-404, Cys-407, Cys-422, and Cys-428. The region spanning 595–673 (NIIDEYKNKT…NEFWKKDNNF (79 aa)) is the BRCT domain.

It belongs to the NAD-dependent DNA ligase family. LigA subfamily. The cofactor is Mg(2+). Requires Mn(2+) as cofactor.

It carries out the reaction NAD(+) + (deoxyribonucleotide)n-3'-hydroxyl + 5'-phospho-(deoxyribonucleotide)m = (deoxyribonucleotide)n+m + AMP + beta-nicotinamide D-nucleotide.. In terms of biological role, DNA ligase that catalyzes the formation of phosphodiester linkages between 5'-phosphoryl and 3'-hydroxyl groups in double-stranded DNA using NAD as a coenzyme and as the energy source for the reaction. It is essential for DNA replication and repair of damaged DNA. This is DNA ligase from Ureaplasma parvum serovar 3 (strain ATCC 27815 / 27 / NCTC 11736).